A 75-amino-acid chain; its full sequence is Exodeoxyribonuclease 7 small subunit (75 aa).

This sequence belongs to the XseB family. As to quaternary structure, heterooligomer composed of large and small subunits.

The protein localises to the cytoplasm. It catalyses the reaction Exonucleolytic cleavage in either 5'- to 3'- or 3'- to 5'-direction to yield nucleoside 5'-phosphates.. In terms of biological role, bidirectionally degrades single-stranded DNA into large acid-insoluble oligonucleotides, which are then degraded further into small acid-soluble oligonucleotides. In Chlamydia pneumoniae (Chlamydophila pneumoniae), this protein is Exodeoxyribonuclease 7 small subunit.